A 325-amino-acid chain; its full sequence is S-adenosylmethionine carrier 1, chloroplastic/mitochondrial (325 aa).

The transit peptide at 1 to 38 (MAPLTLSVDVKSSSATSHDVSKRVMQSSQLKINKGFFA) directs the protein to the chloroplast and mitochondrion. 3 Solcar repeats span residues 52–124 (RTLF…TKQK), 133–215 (LSAV…LCLG), and 228–310 (ENAL…TKRT). The next 5 helical transmembrane spans lie at 55 to 75 (FEGF…LYPI), 97 to 117 (YSGL…FVGV), 132 to 152 (HLSA…ASLI), 230 to 250 (ALIG…LDVI), and 285 to 305 (GIGP…GVLE).

This sequence belongs to the mitochondrial carrier (TC 2.A.29) family. Expressed in seedlings, cotyledons, leaves and flowers. Lower levels of expression in stems and roots. Not detected in senescent leaves, petals and pollen grains.

It localises to the mitochondrion membrane. The protein localises to the plastid. Its subcellular location is the chloroplast membrane. Its activity is regulated as follows. Inhibited strongly by tannic acid, bromocresol purple, mercuric chloride, mersalyl, p-hydroxymercuribenzoate, S-adenosylhomocysteine, S-adenosylcysteine and adenosylornithine, and to a lesser extent by N-ethylmaleimide, bathophenanthroline and pyridoxal-5'-P. Its function is as follows. Transporter involved in exchange reactions through membranes. Has a low uniporter activity. Specifically mediates the transport of S-adenosylmethionine (SAM) and its closest analogs. Probably involved in the uptake of SAM in exchange for S-adenosylhomocysteine (SAHC), which is produced from SAM in the mitochondrial matrix and plastidial stroma by methyltransferase activities. The chain is S-adenosylmethionine carrier 1, chloroplastic/mitochondrial (SAMC1) from Arabidopsis thaliana (Mouse-ear cress).